The sequence spans 86 residues: Small ribosomal subunit protein bS18 (86 aa).

This sequence belongs to the bacterial ribosomal protein bS18 family. As to quaternary structure, part of the 30S ribosomal subunit. Forms a tight heterodimer with protein bS6.

In terms of biological role, binds as a heterodimer with protein bS6 to the central domain of the 16S rRNA, where it helps stabilize the platform of the 30S subunit. The sequence is that of Small ribosomal subunit protein bS18 from Campylobacter lari (strain RM2100 / D67 / ATCC BAA-1060).